Consider the following 533-residue polypeptide: Drimenyl diphosphate synthase (533 aa).

Residues Arg132, Lys133, Gln163, and Trp165 each coordinate (2E,6E)-farnesyl diphosphate. Glu169 contributes to the Mg(2+) binding site. PFTB repeat units follow at residues 274–316, 324–366, 372–415, 425–466, and 474–517; these read VTPM…RRAA, VAEA…AHDP, VDEA…AAHG, AERA…ARGP, and LDRA…FVLL. Asp303 functions as the Proton donor in the catalytic mechanism. Position 501 (Arg501) interacts with (2E,6E)-farnesyl diphosphate.

Belongs to the terpene cyclase/mutase family. It depends on Mg(2+) as a cofactor. Requires Ni(2+) as cofactor. Co(2+) is required as a cofactor.

The enzyme catalyses (2E,6E)-farnesyl diphosphate = (5S,9S,10S)-drim-7-en-11-yl diphosphate. In terms of biological role, catalyzes the cyclization of farnesyl diphosphate (FPP) to drimenyl diphosphate. Cannot use geranylgeranyl diphosphate (GGPP) as substrate. This Streptomyces showdoensis protein is Drimenyl diphosphate synthase.